The chain runs to 314 residues: Methionyl-tRNA formyltransferase (314 aa).

112 to 115 is a (6S)-5,6,7,8-tetrahydrofolate binding site; that stretch reads SLLP.

Belongs to the Fmt family.

The catalysed reaction is L-methionyl-tRNA(fMet) + (6R)-10-formyltetrahydrofolate = N-formyl-L-methionyl-tRNA(fMet) + (6S)-5,6,7,8-tetrahydrofolate + H(+). Its function is as follows. Attaches a formyl group to the free amino group of methionyl-tRNA(fMet). The formyl group appears to play a dual role in the initiator identity of N-formylmethionyl-tRNA by promoting its recognition by IF2 and preventing the misappropriation of this tRNA by the elongation apparatus. This is Methionyl-tRNA formyltransferase from Aeromonas hydrophila subsp. hydrophila (strain ATCC 7966 / DSM 30187 / BCRC 13018 / CCUG 14551 / JCM 1027 / KCTC 2358 / NCIMB 9240 / NCTC 8049).